We begin with the raw amino-acid sequence, 77 residues long: MLPPVRCFTCGRPLGHLWPRFRELVASGKTPGEALDELGVDRYCCRRTLFTSVTYIEHAAKYRVGIHVPPERLKMWG.

Zn(2+) is bound by residues C7, C10, C44, and C45.

Belongs to the archaeal Rpo10/eukaryotic RPB10 RNA polymerase subunit family. Part of the RNA polymerase complex. Zn(2+) is required as a cofactor.

It localises to the cytoplasm. The catalysed reaction is RNA(n) + a ribonucleoside 5'-triphosphate = RNA(n+1) + diphosphate. Its function is as follows. DNA-dependent RNA polymerase (RNAP) catalyzes the transcription of DNA into RNA using the four ribonucleoside triphosphates as substrates. The polypeptide is DNA-directed RNA polymerase subunit Rpo10 (Aeropyrum pernix (strain ATCC 700893 / DSM 11879 / JCM 9820 / NBRC 100138 / K1)).